The primary structure comprises 141 residues: 16 kDa protein (141 aa).

The segment at 97 to 119 (ASATVKKSHKSKPSKKKFKERKD) is disordered. Residues 102-115 (KKSHKSKPSKKKFK) show a composition bias toward basic residues.

The polypeptide is 16 kDa protein (Beta vulgaris (Sugar beet)).